The chain runs to 592 residues: Potassium-transporting ATPase potassium-binding subunit (592 aa).

A run of 13 helical transmembrane segments spans residues 6–26, 67–87, 136–156, 179–199, 283–303, 312–332, 359–379, 389–409, 411–431, 450–470, 489–511, 519–539, and 559–579; these read WLET…FGTY, ACAM…MLLL, GFAV…IAAI, LYIL…QGVI, LSNI…TYTF, QGWA…GVFY, FGLA…CGAV, IGGM…GGVG, GLYT…LMIG, ITTV…AMIL, LYAF…GNTL, VAML…AGGL, and FALW…FPAL.

The protein belongs to the KdpA family. As to quaternary structure, the system is composed of three essential subunits: KdpA, KdpB and KdpC.

It localises to the cell inner membrane. Its function is as follows. Part of the high-affinity ATP-driven potassium transport (or Kdp) system, which catalyzes the hydrolysis of ATP coupled with the electrogenic transport of potassium into the cytoplasm. This subunit binds the periplasmic potassium ions and delivers the ions to the membrane domain of KdpB through an intramembrane tunnel. The protein is Potassium-transporting ATPase potassium-binding subunit of Geotalea uraniireducens (strain Rf4) (Geobacter uraniireducens).